A 405-amino-acid chain; its full sequence is MANIVVKRLERTPIDETPVEIVERKGMGHPDSICDGIAESVSVALCKMYKEKMGVVLHHNTDQVELVGGYAYPEVGGGCMVSPIYILLSGRATMEVLDKEAGKVIKLPVNTTAVNAARDYLKKAIRNMDLEKDVVVDCRIGQGSVDLVEVFDRKRSEIPHANDTSFGVGHAPLSTTEKIVLETEKLLNSDALKAEIPAVGEDIKVMGLREGKKITLTIAMAAVDKYVNSCADYVKVKELAKAKVEENAKKYLDGHELEVCINTADDDEDCIFLTVTGTSAEMGDDGSVGRGNRANGLITPFRPMSMEATSGKNPINHIGKIYNILSNIIAEDVAKIEGVRECQIRILSQIGKPITEPKILDIEMIPENGFELEELSPKAKEVAQKWLDNISEVTERIVSGNVTTF.

141 to 146 (GQGSVD) contributes to the ATP binding site.

It belongs to the AdoMet synthase 2 family. Requires Mg(2+) as cofactor.

It catalyses the reaction L-methionine + ATP + H2O = S-adenosyl-L-methionine + phosphate + diphosphate. It functions in the pathway amino-acid biosynthesis; S-adenosyl-L-methionine biosynthesis; S-adenosyl-L-methionine from L-methionine: step 1/1. Functionally, catalyzes the formation of S-adenosylmethionine from methionine and ATP. In Methanococcus maripaludis (strain C6 / ATCC BAA-1332), this protein is S-adenosylmethionine synthase.